The chain runs to 158 residues: Small ribosomal subunit protein eS10 (158 aa).

The disordered stretch occupies residues 99–158; sequence ETVRRGAVGRPDAPARSAEDRSAYRRAPTTPAAHDKKADVGPGSADLEFRGGFGRGRPAP. Residues 149–158 show a composition bias toward gly residues; that stretch reads GGFGRGRPAP.

Belongs to the eukaryotic ribosomal protein eS10 family.

It localises to the cytoplasm. This Spodoptera frugiperda (Fall armyworm) protein is Small ribosomal subunit protein eS10 (RpS10).